Consider the following 320-residue polypeptide: 1-aminocyclopropane-1-carboxylate oxidase (320 aa).

Residues 156–256 form the Fe2OG dioxygenase domain; sequence PTFGTKVSNY…RMSIASFYNP (101 aa). 3 residues coordinate Fe cation: His-180, Asp-182, and His-237.

This sequence belongs to the iron/ascorbate-dependent oxidoreductase family. Fe cation is required as a cofactor.

The catalysed reaction is 1-aminocyclopropane-1-carboxylate + L-ascorbate + O2 = ethene + L-dehydroascorbate + hydrogen cyanide + CO2 + 2 H2O. Its pathway is alkene biosynthesis; ethylene biosynthesis via S-adenosyl-L-methionine; ethylene from S-adenosyl-L-methionine: step 2/2. The chain is 1-aminocyclopropane-1-carboxylate oxidase (ACO) from Brassica juncea (Indian mustard).